Consider the following 656-residue polypeptide: Chaperone protein DnaK (656 aa).

Disordered stretches follow at residues 488–532 (EMQE…DAVD) and 579–656 (YQQQ…DEDE). The segment covering 492-513 (EAEKHAEEDEKRRERIEARNEA) has biased composition (basic and acidic residues). Over residues 523–532 (LLDENEDAVD) the composition is skewed to acidic residues. Residues 584–635 (GEGGAGAGAGAAGGMGGAGPGGMGGAGPGGMGGAGPGGMGGAGPGAGAGQQG) show a composition bias toward gly residues. A compositionally biased stretch (acidic residues) spans 636–656 (DGEEFVDADFEDVDDEDDEDE).

The protein belongs to the heat shock protein 70 family.

In terms of biological role, acts as a chaperone. The protein is Chaperone protein DnaK of Natronomonas pharaonis (strain ATCC 35678 / DSM 2160 / CIP 103997 / JCM 8858 / NBRC 14720 / NCIMB 2260 / Gabara) (Halobacterium pharaonis).